The primary structure comprises 105 residues: Class I hydrophobin 1 (105 aa).

The first 18 residues, 1–18 (MAFIKSLLIASVAAVAFA), serve as a signal peptide directing secretion. Intrachain disulfides connect Cys-42/Cys-83, Cys-50/Cys-76, Cys-51/Cys-62, and Cys-84/Cys-100.

It belongs to the fungal hydrophobin family. As to quaternary structure, self-assembles to form functional amyloid fibrils called rodlets. Self-assembly into fibrillar rodlets occurs spontaneously at hydrophobic:hydrophilic interfaces and the rodlets further associate laterally to form amphipathic monolayers.

It is found in the secreted. Its subcellular location is the cell wall. Its function is as follows. Aerial growth, conidiation, and dispersal of filamentous fungi in the environment rely upon a capability of their secreting small amphipathic proteins called hydrophobins (HPBs) with low sequence identity. Class I can self-assemble into an outermost layer of rodlet bundles on aerial cell surfaces, conferring cellular hydrophobicity that supports fungal growth, development and dispersal; whereas Class II form highly ordered films at water-air interfaces through intermolecular interactions but contribute nothing to the rodlet structure. This Davidiella tassiana (Mycosphaerella tassiana) protein is Class I hydrophobin 1.